A 378-amino-acid polypeptide reads, in one-letter code: Response regulator aspartate phosphatase A (378 aa).

TPR repeat units follow at residues 101 to 137 (YYFNFFRGMYEFKQKMFVSAMMYYKRAEKNLALVSDD), 148 to 181 (AEIFYNLKQTYVSMSYAVQALETYQMYETYTVRR), 183 to 215 (QCEFVIAGNYDDMQYPERALPHLELALDLAKKE), 222 to 255 (SSALYNLGNCYEKMGELQKAAEYFGKSVSICKSE), 261 to 294 (PHSIYSLTQVLYKQKNDAEAQKKYREGLEIARQY), and 336 to 369 (EELAHDAAQFYIENGQPEKALSFYEKMVHAQKQI).

Belongs to the Rap family. As to quaternary structure, homodimer. Interacts with its substrate, phosphorylated Spo0F, and its inhibitor, the PhrA pentapeptide. The RapA dimer forms a stable complex with two molecules of phosphorylated Spo0F. The complex is dissociated after dephosphorylation of Spo0F by RapA. Requires Mn(2+) as cofactor.

Its subcellular location is the cytoplasm. Its activity is regulated as follows. Phosphatase activity is inhibited by the phosphatase regulator PhrA. Interaction with PhrA dissociates the RapA-Spo0F complex. Activity is abolished in the presence of EDTA. In terms of biological role, involved in the regulation of sporulation. Acts as a phosphatase that specifically dephosphorylates the sporulation initiation phosphotransferase Spo0F and inhibits its activity. The polypeptide is Response regulator aspartate phosphatase A (Bacillus subtilis (strain 168)).